Reading from the N-terminus, the 599-residue chain is Thiamine transporter THI72 (599 aa).

The next 11 membrane-spanning stretches (helical) occupy residues 42 to 62 (WGFW…GMWI), 78 to 98 (IGAF…NSCP), 112 to 132 (FVFG…MSIV), 174 to 194 (LIGF…KPYH), 197 to 217 (YILI…VIYL), 280 to 300 (IVAL…GASA), 333 to 353 (FFCG…NCGF), 372 to 392 (GAIF…YNSS), 395 to 415 (FLTV…VMIC), 447 to 467 (AIVA…WEVN), and 484 to 504 (SFFS…LFPF). The tract at residues 553-599 (HEYKPESSDDELPELTKTSSENTKVFEIVHQKDNEKESSTSSEKQIA) is disordered. Ser560 and Ser572 each carry phosphoserine. Over residues 579 to 590 (EIVHQKDNEKES) the composition is skewed to basic and acidic residues.

This sequence belongs to the purine-cytosine permease (2.A.39) family.

It is found in the membrane. Functionally, low affinity thiamine transporter responsible for intake of thiamine. It is possible that the primary function is the uptake of closely related compounds and that thiamine transport is a secondary activity of these proteins. The polypeptide is Thiamine transporter THI72 (THI72) (Saccharomyces cerevisiae (strain ATCC 204508 / S288c) (Baker's yeast)).